Here is a 251-residue protein sequence, read N- to C-terminus: Ubiquinone/menaquinone biosynthesis C-methyltransferase UbiE (251 aa).

S-adenosyl-L-methionine is bound by residues threonine 74, aspartate 95, 123-124, and serine 140; that span reads NA.

This sequence belongs to the class I-like SAM-binding methyltransferase superfamily. MenG/UbiE family.

It carries out the reaction a 2-demethylmenaquinol + S-adenosyl-L-methionine = a menaquinol + S-adenosyl-L-homocysteine + H(+). It catalyses the reaction a 2-methoxy-6-(all-trans-polyprenyl)benzene-1,4-diol + S-adenosyl-L-methionine = a 5-methoxy-2-methyl-3-(all-trans-polyprenyl)benzene-1,4-diol + S-adenosyl-L-homocysteine + H(+). Its pathway is quinol/quinone metabolism; menaquinone biosynthesis; menaquinol from 1,4-dihydroxy-2-naphthoate: step 2/2. It participates in cofactor biosynthesis; ubiquinone biosynthesis. Its function is as follows. Methyltransferase required for the conversion of demethylmenaquinol (DMKH2) to menaquinol (MKH2) and the conversion of 2-polyprenyl-6-methoxy-1,4-benzoquinol (DDMQH2) to 2-polyprenyl-3-methyl-6-methoxy-1,4-benzoquinol (DMQH2). The protein is Ubiquinone/menaquinone biosynthesis C-methyltransferase UbiE of Yersinia pestis bv. Antiqua (strain Angola).